The following is a 292-amino-acid chain: MAKKAKFFKNGIWYWLFIAPTLLSLIIVVLIPFIIGIYYSFTDWNGINQPVFIGLKNFMTLRDDAEFWNSIIFTAKFAVACIVIINVVGLSLAMLVTRKIFARNFMRTAFYLPNLIGGLILGFIWNFIFVDVFQTISDATHIGWLGGWLSTTNTGFWGLVIVTSWQMIGYVMVIYIAYIESIPTDLIEASKIDGANSWQQFRNVVFPLIAPAFTVSLFITLSNSFKLFDQNLSLTAGAPGNTTQMITLNIYQTAFSAQEMAVGQAKAVIMFLIIAVISVIQVYLTQKREVEM.

Helical transmembrane passes span 15-35 (WLFIAPTLLSLIIVVLIPFII), 77-97 (FAVACIVIINVVGLSLAMLVT), 110-130 (FYLPNLIGGLILGFIWNFIFV), 156-176 (FWGLVIVTSWQMIGYVMVIYI), 205-225 (VFPLIAPAFTVSLFITLSNSF), and 260-280 (MAVGQAKAVIMFLIIAVISVI). An ABC transmembrane type-1 domain is found at 71–281 (IIFTAKFAVA…LIIAVISVIQ (211 aa)).

The protein belongs to the binding-protein-dependent transport system permease family. MalFG subfamily.

Its subcellular location is the cell membrane. Functionally, probably part of a binding-protein-dependent transport system starch degradation products. Probably responsible for the translocation of the substrate across the membrane. This is Probable starch degradation products transport system permease protein AmyD (amyD) from Thermoanaerobacterium thermosulfurigenes (Clostridium thermosulfurogenes).